The following is a 259-amino-acid chain: 5'-nucleotidase SurE (259 aa).

D8, D9, S41, and N99 together coordinate a divalent metal cation.

It belongs to the SurE nucleotidase family. Requires a divalent metal cation as cofactor.

It localises to the cytoplasm. The enzyme catalyses a ribonucleoside 5'-phosphate + H2O = a ribonucleoside + phosphate. In terms of biological role, nucleotidase that shows phosphatase activity on nucleoside 5'-monophosphates. The protein is 5'-nucleotidase SurE of Synechococcus sp. (strain JA-3-3Ab) (Cyanobacteria bacterium Yellowstone A-Prime).